Reading from the N-terminus, the 246-residue chain is Adenosylcobinamide-GDP ribazoletransferase (246 aa).

A run of 7 helical transmembrane segments spans residues 30 to 50, 51 to 71, 105 to 125, 131 to 151, 167 to 189, 193 to 210, and 226 to 246; these read VNWY…VHQA, GLVL…WVYV, VGAM…GAVA, GWGS…LLSI, ISSG…AGWY, LQVM…LWFS, and GAVI…SWWL.

It belongs to the CobS family. Mg(2+) serves as cofactor.

The protein localises to the cell membrane. The enzyme catalyses alpha-ribazole + adenosylcob(III)inamide-GDP = adenosylcob(III)alamin + GMP + H(+). It catalyses the reaction alpha-ribazole 5'-phosphate + adenosylcob(III)inamide-GDP = adenosylcob(III)alamin 5'-phosphate + GMP + H(+). Its pathway is cofactor biosynthesis; adenosylcobalamin biosynthesis; adenosylcobalamin from cob(II)yrinate a,c-diamide: step 7/7. In terms of biological role, joins adenosylcobinamide-GDP and alpha-ribazole to generate adenosylcobalamin (Ado-cobalamin). Also synthesizes adenosylcobalamin 5'-phosphate from adenosylcobinamide-GDP and alpha-ribazole 5'-phosphate. This is Adenosylcobinamide-GDP ribazoletransferase from Brevibacillus brevis (strain 47 / JCM 6285 / NBRC 100599).